The following is a 472-amino-acid chain: 2-methylcitrate synthase, mitochondrial (472 aa).

Residues 1-29 (MALNLTSSRRALGSLKPLTRAAFSGVRGY) constitute a mitochondrion transit peptide. Arginine 75 and lysine 193 together coordinate CoA. An oxaloacetate-binding site is contributed by histidine 271. Leucine 306 is a binding site for CoA. Histidine 307 is an active-site residue. Valine 348, glycine 350, and tyrosine 351 together coordinate CoA. Oxaloacetate-binding residues include histidine 353 and arginine 362. Histidine 353 is a catalytic residue. Residues threonine 402, lysine 403, and asparagine 408 each contribute to the CoA site. Residue aspartate 410 is part of the active site. 2 residues coordinate oxaloacetate: arginine 436 and arginine 456.

Belongs to the citrate synthase family. In terms of assembly, homodimer.

It is found in the mitochondrion matrix. It catalyses the reaction propanoyl-CoA + oxaloacetate + H2O = (2S,3S)-2-methylcitrate + CoA + H(+). The enzyme catalyses oxaloacetate + acetyl-CoA + H2O = citrate + CoA + H(+). It functions in the pathway organic acid metabolism; propanoate degradation. In terms of biological role, component of the methylcitrate cycle that catalyzes the synthesis of (2S,3S)-2-methylcitrate from propionyl-CoA and oxaloacetate. Plays an important role in detoxification of propionyl-CoA, an inhibitor of both primary and secondary metabolism. Also has citrate synthase activity using as substrates acetyl-CoA and oxaloacetate. The sequence is that of 2-methylcitrate synthase, mitochondrial from Gibberella moniliformis (Maize ear and stalk rot fungus).